We begin with the raw amino-acid sequence, 91 residues long: Ixochymostatin (91 aa).

The signal sequence occupies residues 1-20 (MKTYVLQALLLTLAVAVVRA). 5 disulfides stabilise this stretch: cysteine 34-cysteine 70, cysteine 43-cysteine 66, cysteine 48-cysteine 62, cysteine 53-cysteine 90, and cysteine 72-cysteine 84. Positions 34-90 (CAEGETWKECVGSSCAELTCEHPEPSLGCTYDCNYGCYCAPDFFRNANKECVKKDKC) constitute a TIL domain.

The protein belongs to the serine protease inhibitor-like (TIL domain-containing) family. As to expression, salivary gland. Midgut.

It is found in the secreted. Functionally, tight-binding competitive inhibitor of chymotrypsin-like proteases; inhibits host chymase, cathepsin G (CTSG) and chymotrypsin. Inhibits chymase-mediated generation of vasoconstrictor peptides: angiotensin II and endothelin I. Reduces chymase-mediated vascular permeability and vascular endothelial-cadherin degradation. This is Ixochymostatin from Ixodes scapularis (Black-legged tick).